Reading from the N-terminus, the 347-residue chain is Ataxin-7-like protein 3 (347 aa).

The segment at 84 to 105 (CVCPNCSRSIAASRFAPHLEKC) adopts an SGF11-type zinc-finger fold. Residues 116–125 (ANRRIANSNN) are compositionally biased toward low complexity. The segment at 116–184 (ANRRIANSNN…GELSNSDPFK (69 aa)) is disordered. Residues S129 and S131 each carry the phosphoserine modification. The segment covering 132-141 (DQEDNDDIND) has biased composition (acidic residues). Residues 196-263 (LGPEELRSLL…SLDNDGFDMT (68 aa)) form the SCA7 domain. Positions 275-288 (DGSSDLSPSDSGSS) are enriched in low complexity. The segment at 275–347 (DGSSDLSPSD…PTPSIYDDIN (73 aa)) is disordered. S278, S281, and S326 each carry phosphoserine.

It belongs to the SGF11 family. As to quaternary structure, component of some SAGA transcription coactivator-HAT complexes, at least composed of ATXN7, ATXN7L3, ENY2, GCN5L2, SUPT3H, TAF10, TRRAP and USP22. Within the SAGA complex, ENY2, ATXN7, ATXN7L3, and USP22 form an additional subcomplex of SAGA called the DUB module (deubiquitination module). Interacts directly with ENY2 and USP22.

The protein localises to the nucleus. Its function is as follows. Component of the transcription regulatory histone acetylation (HAT) complex SAGA, a multiprotein complex that activates transcription by remodeling chromatin and mediating histone acetylation and deubiquitination. Within the SAGA complex, participates in a subcomplex that specifically deubiquitinates both histones H2A and H2B. The SAGA complex is recruited to specific gene promoters by activators such as MYC, where it is required for transcription. Required for nuclear receptor-mediated transactivation. Within the complex, it is required to recruit USP22 and ENY2 into the SAGA complex. Regulates H2B monoubiquitination (H2Bub1) levels. Affects subcellular distribution of ENY2, USP22 and ATXN7L3B. The protein is Ataxin-7-like protein 3 (Atxn7l3) of Mus musculus (Mouse).